A 210-amino-acid polypeptide reads, in one-letter code: 3-hexulose-6-phosphate synthase (210 aa).

This sequence belongs to the HPS/KGPDC family. HPS subfamily.

It catalyses the reaction D-ribulose 5-phosphate + formaldehyde = D-arabino-hex-3-ulose 6-phosphate. It participates in one-carbon metabolism; formaldehyde assimilation via RuMP pathway; D-fructose 6-phosphate from D-ribulose 5-phosphate and formaldehyde: step 1/2. In terms of biological role, catalyzes the condensation of ribulose 5-phosphate with formaldehyde to form 3-hexulose 6-phosphate. In Staphylococcus aureus (strain bovine RF122 / ET3-1), this protein is 3-hexulose-6-phosphate synthase.